The sequence spans 293 residues: UDP-3-O-acyl-N-acetylglucosamine deacetylase (293 aa).

3 residues coordinate Zn(2+): His79, His236, and Asp240. The Proton donor role is filled by His263.

It belongs to the LpxC family. Requires Zn(2+) as cofactor.

The catalysed reaction is a UDP-3-O-[(3R)-3-hydroxyacyl]-N-acetyl-alpha-D-glucosamine + H2O = a UDP-3-O-[(3R)-3-hydroxyacyl]-alpha-D-glucosamine + acetate. It participates in glycolipid biosynthesis; lipid IV(A) biosynthesis; lipid IV(A) from (3R)-3-hydroxytetradecanoyl-[acyl-carrier-protein] and UDP-N-acetyl-alpha-D-glucosamine: step 2/6. Functionally, catalyzes the hydrolysis of UDP-3-O-myristoyl-N-acetylglucosamine to form UDP-3-O-myristoylglucosamine and acetate, the committed step in lipid A biosynthesis. The polypeptide is UDP-3-O-acyl-N-acetylglucosamine deacetylase (Phenylobacterium zucineum (strain HLK1)).